Reading from the N-terminus, the 293-residue chain is Ribosomal RNA small subunit methyltransferase A (293 aa).

S-adenosyl-L-methionine is bound by residues Asn-36, Leu-38, Gly-63, Glu-84, Asp-111, and Asn-132.

The protein belongs to the class I-like SAM-binding methyltransferase superfamily. rRNA adenine N(6)-methyltransferase family. RsmA subfamily.

The protein localises to the cytoplasm. It catalyses the reaction adenosine(1518)/adenosine(1519) in 16S rRNA + 4 S-adenosyl-L-methionine = N(6)-dimethyladenosine(1518)/N(6)-dimethyladenosine(1519) in 16S rRNA + 4 S-adenosyl-L-homocysteine + 4 H(+). Functionally, specifically dimethylates two adjacent adenosines (A1518 and A1519) in the loop of a conserved hairpin near the 3'-end of 16S rRNA in the 30S particle. May play a critical role in biogenesis of 30S subunits. This is Ribosomal RNA small subunit methyltransferase A from Treponema denticola (strain ATCC 35405 / DSM 14222 / CIP 103919 / JCM 8153 / KCTC 15104).